The chain runs to 476 residues: Glycogen synthase (476 aa).

Residue Lys-15 participates in ADP-alpha-D-glucose binding.

The protein belongs to the glycosyltransferase 1 family. Bacterial/plant glycogen synthase subfamily.

The enzyme catalyses [(1-&gt;4)-alpha-D-glucosyl](n) + ADP-alpha-D-glucose = [(1-&gt;4)-alpha-D-glucosyl](n+1) + ADP + H(+). Its pathway is glycan biosynthesis; glycogen biosynthesis. Synthesizes alpha-1,4-glucan chains using ADP-glucose. This chain is Glycogen synthase, found in Bacillus cereus (strain B4264).